The following is a 297-amino-acid chain: Aspartate carbamoyltransferase catalytic subunit (297 aa).

Carbamoyl phosphate contacts are provided by Arg49 and Thr50. Lys77 provides a ligand contact to L-aspartate. Positions 99, 129, and 132 each coordinate carbamoyl phosphate. Positions 162 and 215 each coordinate L-aspartate. Residues Gly256 and Pro257 each contribute to the carbamoyl phosphate site.

Belongs to the aspartate/ornithine carbamoyltransferase superfamily. ATCase family. Heterododecamer (2C3:3R2) of six catalytic PyrB chains organized as two trimers (C3), and six regulatory PyrI chains organized as three dimers (R2).

It catalyses the reaction carbamoyl phosphate + L-aspartate = N-carbamoyl-L-aspartate + phosphate + H(+). It functions in the pathway pyrimidine metabolism; UMP biosynthesis via de novo pathway; (S)-dihydroorotate from bicarbonate: step 2/3. Functionally, catalyzes the condensation of carbamoyl phosphate and aspartate to form carbamoyl aspartate and inorganic phosphate, the committed step in the de novo pyrimidine nucleotide biosynthesis pathway. The chain is Aspartate carbamoyltransferase catalytic subunit from Legionella pneumophila (strain Lens).